We begin with the raw amino-acid sequence, 313 residues long: uncharacterized protein (313 aa).

To B.subtilis YqxC and T.hyodysenteriae hemolysin TlyA.

This is an uncharacterized protein from Bacillus subtilis (strain 168).